The primary structure comprises 390 residues: Transaldolase (390 aa).

The Schiff-base intermediate with substrate role is filled by lysine 135. EF-hand domains follow at residues 329 to 364 (AFCH…FDAL) and 365 to 388 (DHDH…LALT). 10 residues coordinate Ca(2+): aspartate 342, aspartate 344, aspartate 346, cysteine 348, glutamate 353, aspartate 365, aspartate 367, aspartate 369, arginine 371, and aspartate 376.

The protein belongs to the transaldolase family. Type 1 subfamily.

It is found in the cytoplasm. The enzyme catalyses D-sedoheptulose 7-phosphate + D-glyceraldehyde 3-phosphate = D-erythrose 4-phosphate + beta-D-fructose 6-phosphate. Its pathway is carbohydrate degradation; pentose phosphate pathway; D-glyceraldehyde 3-phosphate and beta-D-fructose 6-phosphate from D-ribose 5-phosphate and D-xylulose 5-phosphate (non-oxidative stage): step 2/3. Transaldolase is important for the balance of metabolites in the pentose-phosphate pathway. The polypeptide is Transaldolase (Prochlorococcus marinus (strain MIT 9313)).